The following is a 252-amino-acid chain: 3-dehydroquinate dehydratase (252 aa).

3-dehydroquinate is bound by residues Ser21, 46 to 48 (EWR), and Arg82. His143 serves as the catalytic Proton donor/acceptor. Lys170 acts as the Schiff-base intermediate with substrate in catalysis. 3-dehydroquinate is bound by residues Arg213, Ser232, and Gln236.

This sequence belongs to the type-I 3-dehydroquinase family. In terms of assembly, homodimer.

It carries out the reaction 3-dehydroquinate = 3-dehydroshikimate + H2O. Its pathway is metabolic intermediate biosynthesis; chorismate biosynthesis; chorismate from D-erythrose 4-phosphate and phosphoenolpyruvate: step 3/7. Its function is as follows. Involved in the third step of the chorismate pathway, which leads to the biosynthesis of aromatic amino acids. Catalyzes the cis-dehydration of 3-dehydroquinate (DHQ) and introduces the first double bond of the aromatic ring to yield 3-dehydroshikimate. This chain is 3-dehydroquinate dehydratase, found in Escherichia coli O8 (strain IAI1).